A 202-amino-acid chain; its full sequence is Holliday junction branch migration complex subunit RuvA (202 aa).

Residues methionine 1–alanine 64 form a domain I region. Positions glycine 65 to proline 143 are domain II. The segment at alanine 144–leucine 152 is flexible linker. The segment at valine 153–proline 202 is domain III.

The protein belongs to the RuvA family. Homotetramer. Forms an RuvA(8)-RuvB(12)-Holliday junction (HJ) complex. HJ DNA is sandwiched between 2 RuvA tetramers; dsDNA enters through RuvA and exits via RuvB. An RuvB hexamer assembles on each DNA strand where it exits the tetramer. Each RuvB hexamer is contacted by two RuvA subunits (via domain III) on 2 adjacent RuvB subunits; this complex drives branch migration. In the full resolvosome a probable DNA-RuvA(4)-RuvB(12)-RuvC(2) complex forms which resolves the HJ.

The protein localises to the cytoplasm. In terms of biological role, the RuvA-RuvB-RuvC complex processes Holliday junction (HJ) DNA during genetic recombination and DNA repair, while the RuvA-RuvB complex plays an important role in the rescue of blocked DNA replication forks via replication fork reversal (RFR). RuvA specifically binds to HJ cruciform DNA, conferring on it an open structure. The RuvB hexamer acts as an ATP-dependent pump, pulling dsDNA into and through the RuvAB complex. HJ branch migration allows RuvC to scan DNA until it finds its consensus sequence, where it cleaves and resolves the cruciform DNA. The chain is Holliday junction branch migration complex subunit RuvA from Laribacter hongkongensis (strain HLHK9).